Here is a 340-residue protein sequence, read N- to C-terminus: Nuclear hormone receptor family member nhr-268 (340 aa).

The nuclear receptor DNA-binding region spans Met-1–Asp-75. 2 consecutive NR C4-type zinc fingers follow at residues Cys-3–Cys-23 and Cys-39–Cys-58. The NR LBD domain occupies Lys-98–His-337.

It belongs to the nuclear hormone receptor family.

It localises to the nucleus. Orphan nuclear receptor. The chain is Nuclear hormone receptor family member nhr-268 (nhr-268) from Caenorhabditis elegans.